A 261-amino-acid polypeptide reads, in one-letter code: Ribosomal RNA small subunit methyltransferase J (261 aa).

S-adenosyl-L-methionine is bound by residues Arg109–Asp110, Glu125–Arg126, and Asp179.

This sequence belongs to the methyltransferase superfamily. RsmJ family.

It is found in the cytoplasm. The enzyme catalyses guanosine(1516) in 16S rRNA + S-adenosyl-L-methionine = N(2)-methylguanosine(1516) in 16S rRNA + S-adenosyl-L-homocysteine + H(+). Its function is as follows. Specifically methylates the guanosine in position 1516 of 16S rRNA. The sequence is that of Ribosomal RNA small subunit methyltransferase J from Pseudomonas aeruginosa (strain ATCC 15692 / DSM 22644 / CIP 104116 / JCM 14847 / LMG 12228 / 1C / PRS 101 / PAO1).